The following is a 591-amino-acid chain: Aspartate--tRNA ligase (591 aa).

An L-aspartate-binding site is contributed by E175. Positions 199–202 (QLFK) are aspartate. R221 serves as a coordination point for L-aspartate. ATP contacts are provided by residues 221-223 (RDE) and Q230. H449 lines the L-aspartate pocket. An ATP-binding site is contributed by E483. L-aspartate is bound at residue R490. An ATP-binding site is contributed by 535–538 (GLDR).

It belongs to the class-II aminoacyl-tRNA synthetase family. Type 1 subfamily. In terms of assembly, homodimer.

The protein resides in the cytoplasm. It catalyses the reaction tRNA(Asp) + L-aspartate + ATP = L-aspartyl-tRNA(Asp) + AMP + diphosphate. Its function is as follows. Catalyzes the attachment of L-aspartate to tRNA(Asp) in a two-step reaction: L-aspartate is first activated by ATP to form Asp-AMP and then transferred to the acceptor end of tRNA(Asp). In Oceanobacillus iheyensis (strain DSM 14371 / CIP 107618 / JCM 11309 / KCTC 3954 / HTE831), this protein is Aspartate--tRNA ligase.